Here is a 1252-residue protein sequence, read N- to C-terminus: ABC transporter B family member 19 (1252 aa).

An N-linked (GlcNAc...) asparagine glycan is attached at Asn5. The 290-residue stretch at 41 to 330 folds into the ABC transmembrane type-1 1 domain; it reads MFVGSLGAIV…SFSNLGAFSK (290 aa). Helical transmembrane passes span 42 to 62 and 88 to 108; these read FVGS…FLLF and LYFV…IACW. Asp136 serves as a coordination point for ATP. 4 consecutive transmembrane segments (helical) span residues 163 to 183, 187 to 207, 274 to 294, and 308 to 328; these read VGNF…GFVS, LALL…LYAY, CTYG…GVFI, and IFSA…LGAF. Residues Tyr276 and Trp283 each contribute to the brassinolide site. One can recognise an ABC transporter 1 domain in the interval 365–601; sequence IEFKDVTFSY…SGAYASLIRF (237 aa). Residues Tyr374, Ser376, Gly405, Lys406, Ser407, Thr408, and Glu529 each coordinate ATP. N-linked (GlcNAc...) asparagine glycosylation occurs at Asn641. One can recognise an ABC transmembrane type-1 2 domain in the interval 687–975; the sequence is SIMGAVGSIL…TVSLAPEIIR (289 aa). Helical transmembrane passes span 688-708 and 732-752; these read IMGA…AIVM and FIYI…HYFF. Asn758 is a glycosylation site (N-linked (GlcNAc...) asparagine). Asp780 contacts ATP. N-linked (GlcNAc...) asparagine glycosylation is found at Asn785 and Asn814. The next 3 helical transmembrane spans lie at 822 to 842, 914 to 934, and 949 to 969; these read FIVA…TFPL, GFLF…ILWY, and VIKV…TVSL. The interaction with FKBP42/TWD1 stretch occupies residues 965–1252; that stretch reads ETVSLAPEII…RLLQLQTHRI (288 aa). Positions 1010–1246 constitute an ABC transporter 2 domain; the sequence is IEFRHVDFAY…PEGAYSRLLQ (237 aa). Residues Tyr1019, Ser1021, Arg1022, Lys1051, Ser1052, and Ser1053 each contribute to the ATP site.

Belongs to the ABC transporter superfamily. ABCB family. Multidrug resistance exporter (TC 3.A.1.201) subfamily. As to quaternary structure, interacts with 1-naphthylphthalamic acid (NPA), and FKBP42/TWD1. Post-translationally, phosphorylated by PHOT1 in phototropic seedlings, to modulates auxin export and distribution and regulates leaf and petiole curling. Ubiquitous, mostly in shoot meristems. Present in the majority of stem cells, predominantly in a non-polar manner. Accumulates in seedlings roots and hypocotyls, and in roots apices and inflorescences.

The protein resides in the cell membrane. The enzyme catalyses (indol-3-yl)acetate(in) + ATP + H2O = (indol-3-yl)acetate(out) + ADP + phosphate + H(+). It carries out the reaction brassinolide(in) + ATP + H2O = brassinolide(out) + ADP + phosphate + H(+). The catalysed reaction is 24-epi-brassinolide(in) + ATP + H2O = 24-epi-brassinolide(out) + ADP + phosphate + H(+). It catalyses the reaction 24-epi-castasterone(in) + ATP + H2O = 24-epi-castasterone(out) + ADP + phosphate + H(+). The enzyme catalyses castasterone(in) + ATP + H2O = castasterone(out) + ADP + phosphate + H(+). With respect to regulation, transport capacity is stimulated by the chaperone protein FKBP42/TWD1. ATPase activity is specifically activated by bioactive brassinosteroids in a dose-dependent manner, including brassinolide (BL), 24-epiBL and 24-epicastasterone (24-epiCS). Inhibited by vanadate. Its function is as follows. Brassinosteroid exporter that, in conjunction with ABCB1, supports the accumulation of exogenous brassinosteroids (BR) in the apoplast, thus promoting BR signaling initiation involving the specific receptor BRI1 and required for plant growth and stress responses. Mediates the transport of castasterone (CSA) and brassinolide (BL) across the plasma membrane. Auxin efflux transporter that acts as a negative regulator of light signaling to promote hypocotyl elongation by mediating leaf tip to petiole auxin flux. Required for the regulation of leaf position and morphology during PHOT1-mediated blue light responses involving auxin distribution, especially in low light fluence. Together with ABCB1 and in a FKBP42/TWD1-dependent manner, supports seed development by promoting stamen elongation and, to a lesser extent, anther dehiscence and pollen maturation, probably as auxin transporters. Contributes to the connective auxin transport (CAT) that ensures communication across the shoot system, including auxin loading at axillary bud apices to influence strigolactone-mediated bud outgrowth responses and shoot branching control. Mediates the accumulation of chlorophyll and anthocyanin, as well as the expression of genes in response to light. Participates in auxin efflux and thus regulates the polar auxin basipetal transport (from auxin-producing leaves to auxin-sensitive tissues, and from root tips to root elongating zone). Involved in diverse auxin-mediated responses including gravitropism, phototropism and lateral root formation. Required for the regulation of organ bending, such as gravitropic root bending. The chain is ABC transporter B family member 19 from Arabidopsis thaliana (Mouse-ear cress).